The primary structure comprises 699 residues: DnaJ homolog subfamily C member 14 (699 aa).

The interval 1-230 (MAQKHPGEGG…RHRLGRKRSQ (230 aa)) is disordered. The span at 75–84 (HGPPRGPGPP) shows a compositional bias: pro residues. Acidic residues predominate over residues 86-102 (AEEDPDQSEASSEESGV). Residues 117-133 (DGNSSFLSIPSTCNCQG) are compositionally biased toward polar residues. The segment covering 163–176 (GEDEELEGEYDEEE) has biased composition (acidic residues). Positions 203–218 (PAKEDTREGGRRDPRS) are enriched in basic and acidic residues. A compositionally biased stretch (basic residues) spans 219-228 (PGRHRLGRKR). 3 helical membrane-spanning segments follow: residues 251–271 (AGFW…ETCG), 301–321 (GWAQ…AGLF), and 327–347 (LVGA…QLGW). The J domain occupies 444-508 (NPFHVLGVEA…ERRKEYEMKR (65 aa)). Residues 655 to 699 (MSNGNFFAAPQPGPGATAASKPNSTVPKGEAKPKRRKKVRRPFQR) are disordered. A compositionally biased stretch (low complexity) spans 662–673 (AAPQPGPGATAA). Residues 687–699 (PKRRKKVRRPFQR) are compositionally biased toward basic residues.

As to quaternary structure, interacts with the FxxxFxxxF motif of DRD1 via its C-terminal domain. Interacts with pestivirus nonstructural protein NS2.

Its subcellular location is the endoplasmic reticulum membrane. Functionally, regulates the export of target proteins, such as DRD1, from the endoplasmic reticulum to the cell surface. Promotes cleavage of pestivirus polyprotein. This chain is DnaJ homolog subfamily C member 14 (DNAJC14), found in Bos taurus (Bovine).